The primary structure comprises 1048 residues: 3-hydroxy-3-methylglutaryl-coenzyme A reductase (1048 aa).

Over M1–P32 the chain is Cytoplasmic. Residues I33–G53 traverse the membrane as a helical segment. Residues T54 to T220 are Lumenal-facing. A helical transmembrane segment spans residues V221 to F241. Positions D222–V403 constitute an SSD domain. Topologically, residues R242–R250 are cytoplasmic. A helical transmembrane segment spans residues F251–I271. The Lumenal segment spans residues T272 to D276. Residues V277–F297 traverse the membrane as a helical segment. Residues E298–E348 are Cytoplasmic-facing. Residues G349 to L369 traverse the membrane as a helical segment. The Lumenal segment spans residues R370–H377. Residues F378 to A398 traverse the membrane as a helical segment. Residues T399–W439 are Cytoplasmic-facing. The helical transmembrane segment at W440–F460 threads the bilayer. The Lumenal segment spans residues Y461–R542. 2 N-linked (GlcNAc...) asparagine glycosylation sites follow: N470 and N520. A helical transmembrane segment spans residues L543 to A563. The Cytoplasmic segment spans residues R564–K1048. E729 functions as the Charge relay system in the catalytic mechanism. CoA is bound at residue S735 to K741. Residues S796–F798 and D823–S831 contribute to the NADP(+) site. The active-site Charge relay system is the K863. V892–K894 lines the CoA pocket. D939 acts as the Charge relay system in catalysis. Residue A1034–H1035 coordinates CoA. H1035 functions as the Proton donor in the catalytic mechanism. N1039–R1040 is a binding site for NADP(+).

Belongs to the HMG-CoA reductase family.

It localises to the endoplasmic reticulum membrane. The enzyme catalyses (R)-mevalonate + 2 NADP(+) + CoA = (3S)-3-hydroxy-3-methylglutaryl-CoA + 2 NADPH + 2 H(+). It participates in metabolic intermediate biosynthesis; (R)-mevalonate biosynthesis; (R)-mevalonate from acetyl-CoA: step 3/3. Its function is as follows. HMG-CoA reductase; part of the first module of ergosterol biosynthesis pathway that includes the early steps of the pathway, conserved across all eukaryotes, and which results in the formation of mevalonate from acetyl-coenzyme A (acetyl-CoA). In this module, the cytosolic acetyl-CoA acetyltransferase catalyzes the formation of acetoacetyl-CoA. The hydroxymethylglutaryl-CoA synthase then condenses acetyl-CoA with acetoacetyl-CoA to form HMG-CoA. The rate-limiting step of the early module is the reduction to mevalonate by the 3-hydroxy-3-methylglutaryl-coenzyme A (HMG-CoA) reductase. The polypeptide is 3-hydroxy-3-methylglutaryl-coenzyme A reductase (Aspergillus terreus).